The sequence spans 354 residues: GTPase Obg (354 aa).

The Obg domain maps to M1–L159. Residues A160–E334 form the OBG-type G domain. GTP is bound by residues G166 to S173, F191 to H195, D213 to G216, N284 to D287, and S315 to M317. 2 residues coordinate Mg(2+): S173 and T193.

It belongs to the TRAFAC class OBG-HflX-like GTPase superfamily. OBG GTPase family. As to quaternary structure, monomer. Requires Mg(2+) as cofactor.

Its subcellular location is the cytoplasm. In terms of biological role, an essential GTPase which binds GTP, GDP and possibly (p)ppGpp with moderate affinity, with high nucleotide exchange rates and a fairly low GTP hydrolysis rate. Plays a role in control of the cell cycle, stress response, ribosome biogenesis and in those bacteria that undergo differentiation, in morphogenesis control. This is GTPase Obg from Nitrosospira multiformis (strain ATCC 25196 / NCIMB 11849 / C 71).